The sequence spans 420 residues: 3-phosphoshikimate 1-carboxyvinyltransferase (420 aa).

Residues lysine 20, serine 21, and arginine 25 each coordinate 3-phosphoshikimate. Residue lysine 20 participates in phosphoenolpyruvate binding. Arginine 119 contacts phosphoenolpyruvate. Serine 161, serine 162, glutamine 163, serine 189, aspartate 303, glutamine 326, and lysine 330 together coordinate 3-phosphoshikimate. Glutamine 163 contacts phosphoenolpyruvate. Aspartate 303 acts as the Proton acceptor in catalysis. Positions 334, 375, and 400 each coordinate phosphoenolpyruvate.

The protein belongs to the EPSP synthase family. As to quaternary structure, monomer.

It is found in the cytoplasm. It carries out the reaction 3-phosphoshikimate + phosphoenolpyruvate = 5-O-(1-carboxyvinyl)-3-phosphoshikimate + phosphate. The protein operates within metabolic intermediate biosynthesis; chorismate biosynthesis; chorismate from D-erythrose 4-phosphate and phosphoenolpyruvate: step 6/7. Functionally, catalyzes the transfer of the enolpyruvyl moiety of phosphoenolpyruvate (PEP) to the 5-hydroxyl of shikimate-3-phosphate (S3P) to produce enolpyruvyl shikimate-3-phosphate and inorganic phosphate. The protein is 3-phosphoshikimate 1-carboxyvinyltransferase of Dehalococcoides mccartyi (strain ATCC BAA-2100 / JCM 16839 / KCTC 5957 / BAV1).